Consider the following 329-residue polypeptide: Basic leucine zipper 61 (329 aa).

Disordered regions lie at residues 1 to 22 (MAQLPPKIPTMTTPNWPDFSSQ) and 98 to 204 (DDVH…HDPK). Polar residues predominate over residues 10 to 22 (TMTTPNWPDFSSQ). Positions 119–133 (PTRSSSNTSTPSDHN) are enriched in low complexity. Basic and acidic residues predominate over residues 139–154 (DNNKEAPPSDHDHHMD). Over residues 155–169 (NNVANQNNAAGNNYN) the composition is skewed to low complexity. Residues 202–254 (DPKRVKRILANRQSAQRSRVRKLQYISELERSVTSLQTEVSVLSPRVAFLDHQ) form the bZIP domain. A basic motif region spans residues 204 to 223 (KRVKRILANRQSAQRSRVRK). The segment at 230–251 (LERSVTSLQTEVSVLSPRVAFL) is leucine-zipper. The segment covering 304–313 (KMENNVSDQS) has biased composition (polar residues). The tract at residues 304–329 (KMENNVSDQSPADIKPSVEKEQLLNV) is disordered. Over residues 319-329 (PSVEKEQLLNV) the composition is skewed to basic and acidic residues.

In terms of assembly, forms heterodimers with BZIP18, BZIP43 and VIP1/BZIP51.

Its subcellular location is the nucleus. In terms of biological role, transcriptional activator. This Arabidopsis thaliana (Mouse-ear cress) protein is Basic leucine zipper 61.